Reading from the N-terminus, the 336-residue chain is Cell division protein ZipA (336 aa).

Residues 1 to 6 (MEDLQL) lie on the Periplasmic side of the membrane. A helical membrane pass occupies residues 7 to 27 (VLFVLGAIAIIAVLVHGFWSI). Residues 28–336 (RKQQPKPIKE…DYLRRIKAIV (309 aa)) are Cytoplasmic-facing. 2 disordered regions span residues 31–118 (QPKP…PVRA) and 174–200 (YGAT…EPLG). The span at 73-91 (LPSSRNHTSVPVMTLQKAS) shows a compositional bias: polar residues. The span at 108-118 (TTAERAEPVRA) shows a compositional bias: basic and acidic residues. Positions 179–193 (QASPQPASPVQSQAP) are enriched in low complexity.

This sequence belongs to the ZipA family. As to quaternary structure, interacts with FtsZ via their C-terminal domains.

Its subcellular location is the cell inner membrane. In terms of biological role, essential cell division protein that stabilizes the FtsZ protofilaments by cross-linking them and that serves as a cytoplasmic membrane anchor for the Z ring. Also required for the recruitment to the septal ring of downstream cell division proteins. This is Cell division protein ZipA from Shewanella denitrificans (strain OS217 / ATCC BAA-1090 / DSM 15013).